A 219-amino-acid polypeptide reads, in one-letter code: Ribosomal RNA small subunit methyltransferase Nep1 (219 aa).

S-adenosyl-L-methionine is bound by residues glycine 178, glycine 183, and 196–201; that span reads LYKAPL.

The protein belongs to the class IV-like SAM-binding methyltransferase superfamily. RNA methyltransferase NEP1 family. As to quaternary structure, homodimer.

It catalyses the reaction a pseudouridine in rRNA + S-adenosyl-L-methionine = an N(1)-methylpseudouridine in rRNA + S-adenosyl-L-homocysteine + H(+). Functionally, methyltransferase involved in ribosomal biogenesis. Specifically catalyzes the N1-methylation of the pseudouridine corresponding to position 914 in M.jannaschii 16S rRNA. This chain is Ribosomal RNA small subunit methyltransferase Nep1, found in Thermococcus onnurineus (strain NA1).